A 305-amino-acid chain; its full sequence is Ribosomal RNA small subunit methyltransferase H (305 aa).

S-adenosyl-L-methionine is bound by residues 49-51 (GGH), Asp68, Phe100, Asp116, and Gln123.

The protein belongs to the methyltransferase superfamily. RsmH family.

The protein localises to the cytoplasm. It catalyses the reaction cytidine(1402) in 16S rRNA + S-adenosyl-L-methionine = N(4)-methylcytidine(1402) in 16S rRNA + S-adenosyl-L-homocysteine + H(+). Its function is as follows. Specifically methylates the N4 position of cytidine in position 1402 (C1402) of 16S rRNA. The polypeptide is Ribosomal RNA small subunit methyltransferase H (Synechocystis sp. (strain ATCC 27184 / PCC 6803 / Kazusa)).